The sequence spans 699 residues: Ubiquitin-like modifier-activating enzyme ATG7 (699 aa).

Positions 370-375 match the GXGXXG motif motif; that stretch reads GAGTLG. Cys550 (glycyl thioester intermediate) is an active-site residue. A homodimerization region spans residues 653-691; sequence ALASRDYVAELSGLAEVQRLAEKAAAEMQWSEDEEGMGE.

Belongs to the ATG7 family. In terms of assembly, homodimer. Interacts with ATG8 through a thioester bond between Cys-550 and the C-terminal Gly of ATG8 and with ATG12 through a thioester bond between Cys-550 and the C-terminal Gly of ATG12. Also interacts with ATG3.

It is found in the cytoplasm. The protein localises to the preautophagosomal structure. E1-like activating enzyme involved in the 2 ubiquitin-like systems required for cytoplasm to vacuole transport (Cvt) and autophagy. Activates ATG12 for its conjugation with ATG5 and ATG8 for its conjugation with phosphatidylethanolamine. Both systems are needed for the ATG8 association to Cvt vesicles and autophagosomes membranes. Autophagy is essential for maintenance of amino acid levels and protein synthesis under nitrogen starvation. Required for selective autophagic degradation of the nucleus (nucleophagy) as well as for mitophagy which contributes to regulate mitochondrial quantity and quality by eliminating the mitochondria to a basal level to fulfill cellular energy requirements and preventing excess ROS production. Required for normal mycelial growth and conidiogenesis. This is Ubiquitin-like modifier-activating enzyme ATG7 from Sordaria macrospora (strain ATCC MYA-333 / DSM 997 / K(L3346) / K-hell).